The primary structure comprises 107 residues: Cytochrome c-550 (107 aa).

Residues C11, C14, H15, and M80 each contribute to the heme c site.

Post-translationally, binds 1 heme c group covalently per subunit.

This Ancylobacter novellus (Thiobacillus novellus) protein is Cytochrome c-550.